The sequence spans 474 residues: Uronate isomerase (474 aa).

Belongs to the metallo-dependent hydrolases superfamily. Uronate isomerase family.

It catalyses the reaction D-glucuronate = D-fructuronate. The enzyme catalyses aldehydo-D-galacturonate = keto-D-tagaturonate. Its pathway is carbohydrate metabolism; pentose and glucuronate interconversion. This Photorhabdus laumondii subsp. laumondii (strain DSM 15139 / CIP 105565 / TT01) (Photorhabdus luminescens subsp. laumondii) protein is Uronate isomerase.